A 313-amino-acid chain; its full sequence is MDSPSQHGSHTSLVVIQPPAVEGRQRLDYDRDTQPATILSLDQIKAIRGSNEYTEGPSVARRPAPRTAPRPEKQERTHEIIPANVNSSYEHRPASHPGNARGSVLSRSTSTGSAASSGSSSSVSSEQGLLGRSPPTRPIPGHRSDRVIRTQPKQLLVEDLKASLKEDPTQHKFICEQCGKCKCGECTAPRALPSCLACDRQCLCSAESMVEYGTCMCLVKGIFYHCSNDDDGGSYSDNPCSCSQSHCCSRYLCMGALSLCLPCLLCYPPAKGCLKLCRGCYDWTHRPGCRCRNSNTVYCKLESCPSRAQGKLS.

Met1 is modified (N-acetylmethionine). Positions 43 to 152 (QIKAIRGSNE…RSDRVIRTQP (110 aa)) are disordered. Positions 69 to 79 (PRPEKQERTHE) are enriched in basic and acidic residues. Over residues 106–125 (SRSTSTGSAASSGSSSSVSS) the composition is skewed to low complexity. The 113-residue stretch at 177–289 (QCGKCKCGEC…CYDWTHRPGC (113 aa)) folds into the SPR domain.

The protein belongs to the sprouty family. In terms of assembly, forms heterodimers with SPRY2. Interacts with TESK1. Interacts with CAV1 (via C-terminus).

The protein localises to the cytoplasm. The protein resides in the membrane. Its function is as follows. Inhibits fibroblast growth factor (FGF)-induced retinal lens fiber differentiation, probably by inhibiting FGF-mediated phosphorylation of ERK1/2. Inhibits TGFB-induced epithelial-to-mesenchymal transition in lens epithelial cells. The chain is Protein sprouty homolog 1 (Spry1) from Mus musculus (Mouse).